We begin with the raw amino-acid sequence, 422 residues long: UPF0597 protein Kole_0595 (422 aa).

The protein belongs to the UPF0597 family.

The polypeptide is UPF0597 protein Kole_0595 (Kosmotoga olearia (strain ATCC BAA-1733 / DSM 21960 / TBF 19.5.1)).